The sequence spans 344 residues: Uroporphyrinogen decarboxylase (344 aa).

Substrate contacts are provided by residues 25–29 (RQAGR), Asp75, Tyr152, Ser207, and His323.

Belongs to the uroporphyrinogen decarboxylase family. Homodimer.

Its subcellular location is the cytoplasm. It carries out the reaction uroporphyrinogen III + 4 H(+) = coproporphyrinogen III + 4 CO2. Its pathway is porphyrin-containing compound metabolism; protoporphyrin-IX biosynthesis; coproporphyrinogen-III from 5-aminolevulinate: step 4/4. In terms of biological role, catalyzes the decarboxylation of four acetate groups of uroporphyrinogen-III to yield coproporphyrinogen-III. The polypeptide is Uroporphyrinogen decarboxylase (Ruegeria pomeroyi (strain ATCC 700808 / DSM 15171 / DSS-3) (Silicibacter pomeroyi)).